An 83-amino-acid polypeptide reads, in one-letter code: Kunitz-type serine protease inhibitor textilinin-3 (83 aa).

The first 24 residues, 1–24 (MSSGGLLLLLGLLTLWEVLTPVSS), serve as a signal peptide directing secretion. The BPTI/Kunitz inhibitor domain maps to 31 to 81 (CKLPAETGRCNAKIPRFYYNPRQHQCIEFLYGGCGGNANNFKTIKECESTC). Cystine bridges form between cysteine 31-cysteine 81, cysteine 40-cysteine 64, and cysteine 56-cysteine 77.

Belongs to the venom Kunitz-type family. As to expression, expressed by the venom gland.

It localises to the secreted. In terms of biological role, serine protease inhibitor. Does not inhibit plasmin, and does not reduce blood loss in the mouse tail vein blood loss model. This Pseudonaja textilis textilis (Eastern brown snake) protein is Kunitz-type serine protease inhibitor textilinin-3.